A 26-amino-acid polypeptide reads, in one-letter code: MKFYTIKLPKFLGGIVRAMLGSFRKD.

Residues 3-9 (FYTIKLP) form an important for localization region.

As to quaternary structure, interacts with SpoIVA. May interact with the ATP-dependent protease FtsH.

The protein localises to the forespore outer membrane. In terms of biological role, coordinates cortex and coat assembly during sporulation. Associates with the spore coat protein SpoIVA and with the outer forespore membrane, thereby serving as a membrane anchor that tethers SpoIVA and the entire spore coat to the forespore surface. May also serve as a competitive inhibitor of FtsH activity during sporulation. The protein is Stage V sporulation protein M of Bacillus subtilis (strain 168).